Reading from the N-terminus, the 314-residue chain is Tudor-interacting repair regulator protein (314 aa).

Gly-2 carries N-myristoyl glycine lipidation.

The protein belongs to the Nudix hydrolase family. TIRR subfamily. As to quaternary structure, interacts (via the cytoplasmic part) with syndecan-4 (SDC4), but not with other syndecan proteins. Myristoylated in vitro; additional evidence is however required to confirm myristoylation in vivo. In terms of tissue distribution, ubiquitously expressed. Expressed in embryonic brain, eyes, gizzard, heart, intestine, kidney, liver, tibia and skin.

Its subcellular location is the nucleus. The protein resides in the cytoplasm. The protein localises to the cytoskeleton. It is found in the cell membrane. It localises to the cell junction. Its subcellular location is the focal adhesion. Its function is as follows. Key regulator of TP53BP1 required to stabilize TP53BP1 and regulate its recruitment to chromatin. The chain is Tudor-interacting repair regulator protein (NUDT16L1) from Gallus gallus (Chicken).